The chain runs to 156 residues: MENEKNYRPNVAAIVLSSSYPFECKIFIARRSDMDNIWQFPQGGIDKGESVKNALFRELKEEIGTDEVEIIAEYPEWLSYDFPSKIVKKMYPYDGQIQKYFLVRLKHGATININTKHPEFDDYQFVSVKQIFEMINHFKKNIYVRVIKYFEEKGYI.

The Nudix hydrolase domain maps to 6 to 148 (NYRPNVAAIV…KKNIYVRVIK (143 aa)). Positions 43-64 (GGIDKGESVKNALFRELKEEIG) match the Nudix box motif.

It belongs to the Nudix hydrolase family. RppH subfamily. Requires a divalent metal cation as cofactor.

Accelerates the degradation of transcripts by removing pyrophosphate from the 5'-end of triphosphorylated RNA, leading to a more labile monophosphorylated state that can stimulate subsequent ribonuclease cleavage. The polypeptide is RNA pyrophosphohydrolase (Campylobacter jejuni subsp. jejuni serotype O:2 (strain ATCC 700819 / NCTC 11168)).